We begin with the raw amino-acid sequence, 208 residues long: Small ribosomal subunit protein eS8 (208 aa).

The segment at 1-40 (MGISRDNWHKRRKTGGKRKPVHKKRKYELGRPPSNTKLGP) is disordered. Positions 8–26 (WHKRRKTGGKRKPVHKKRK) are enriched in basic residues.

The protein belongs to the eukaryotic ribosomal protein eS8 family. In terms of assembly, component of the small ribosomal subunit.

It localises to the cytoplasm. In terms of biological role, component of the small ribosomal subunit. The ribosome is a large ribonucleoprotein complex responsible for the synthesis of proteins in the cell. In Ictalurus punctatus (Channel catfish), this protein is Small ribosomal subunit protein eS8 (rps8).